A 189-amino-acid chain; its full sequence is Movement protein p22 (189 aa).

This sequence belongs to the tombusvirus/aureusvirus movement protein p22 family. Interacts with host protein HFI22. In terms of processing, phosphorylated.

It is found in the host membrane. In terms of biological role, cell-to-cell movement. Displays RNA-binding activity. This chain is Movement protein p22, found in Capsicum annuum (Capsicum pepper).